A 126-amino-acid polypeptide reads, in one-letter code: Fatty acid-binding protein 2, liver (126 aa).

Cholate contacts are provided by residues 54–56 (TPN), 99–101 (HIQ), and Arg121.

This sequence belongs to the calycin superfamily. Fatty-acid binding protein (FABP) family.

It is found in the cytoplasm. Binds free fatty acids and their coenzyme A derivatives, bilirubin, and some other small molecules in the cytoplasm. May be involved in intracellular lipid transport. The specificity of axolotl L-FABP differs from that of LB-FABP. Binds 2 ligands per protein molecule. This Ambystoma mexicanum (Axolotl) protein is Fatty acid-binding protein 2, liver.